The sequence spans 441 residues: Damage-control phosphatase ARMT1 (441 aa).

Ala-2 bears the N-acetylalanine mark. Lys-40 bears the N6-acetyllysine mark. A Phosphoserine modification is found at Ser-102. Mn(2+)-binding residues include Asp-253 and Asn-254. 253-254 lines the substrate pocket; the sequence is DN. Glu-258 and Asp-291 together coordinate S-adenosyl-L-methionine. Residue Asp-291 participates in Mn(2+) binding. Substrate-binding positions include 367 to 371 and Lys-404; that span reads DLNYR. A Subfamily III RTxK motif motif is present at residues 401-404; that stretch reads RTLK.

Belongs to the damage-control phosphatase family. Sugar phosphate phosphatase III subfamily. Mn(2+) is required as a cofactor. It depends on Ni(2+) as a cofactor. Automethylated.

The enzyme catalyses beta-D-fructose 1-phosphate + H2O = D-fructose + phosphate. The catalysed reaction is beta-D-fructose 6-phosphate = dihydroxyacetone + D-glyceraldehyde 3-phosphate. It carries out the reaction L-glutamyl-[protein] + S-adenosyl-L-methionine = [protein]-L-glutamate 5-O-methyl ester + S-adenosyl-L-homocysteine. Functionally, metal-dependent phosphatase that shows phosphatase activity against several substrates, including fructose-1-phosphate and fructose-6-phosphate. Its preference for fructose-1-phosphate, a strong glycating agent that causes DNA damage rather than a canonical yeast metabolite, suggests a damage-control function in hexose phosphate metabolism. Has also been shown to have O-methyltransferase activity that methylates glutamate residues of target proteins to form gamma-glutamyl methyl ester residues. Possibly methylates PCNA, suggesting it is involved in the DNA damage response. The chain is Damage-control phosphatase ARMT1 from Bos taurus (Bovine).